We begin with the raw amino-acid sequence, 374 residues long: Dual-specificity RNA methyltransferase RlmN (374 aa).

Glu94 (proton acceptor) is an active-site residue. Residues 100 to 339 (EEDRATLCVS…VTIRKTRGDD (240 aa)) form the Radical SAM core domain. Cys107 and Cys344 are disulfide-bonded. [4Fe-4S] cluster-binding residues include Cys114, Cys118, and Cys121. Residues 168 to 169 (GE), Ser200, 222 to 224 (SLH), and Asn301 contribute to the S-adenosyl-L-methionine site. Catalysis depends on Cys344, which acts as the S-methylcysteine intermediate.

It belongs to the radical SAM superfamily. RlmN family. It depends on [4Fe-4S] cluster as a cofactor.

Its subcellular location is the cytoplasm. It catalyses the reaction adenosine(2503) in 23S rRNA + 2 reduced [2Fe-2S]-[ferredoxin] + 2 S-adenosyl-L-methionine = 2-methyladenosine(2503) in 23S rRNA + 5'-deoxyadenosine + L-methionine + 2 oxidized [2Fe-2S]-[ferredoxin] + S-adenosyl-L-homocysteine. It carries out the reaction adenosine(37) in tRNA + 2 reduced [2Fe-2S]-[ferredoxin] + 2 S-adenosyl-L-methionine = 2-methyladenosine(37) in tRNA + 5'-deoxyadenosine + L-methionine + 2 oxidized [2Fe-2S]-[ferredoxin] + S-adenosyl-L-homocysteine. Its function is as follows. Specifically methylates position 2 of adenine 2503 in 23S rRNA and position 2 of adenine 37 in tRNAs. m2A2503 modification seems to play a crucial role in the proofreading step occurring at the peptidyl transferase center and thus would serve to optimize ribosomal fidelity. This Vibrio vulnificus (strain YJ016) protein is Dual-specificity RNA methyltransferase RlmN.